We begin with the raw amino-acid sequence, 358 residues long: tRNA-specific 2-thiouridylase MnmA (358 aa).

ATP-binding positions include 22–29 (LVSGGIDS) and phenylalanine 48. The Nucleophile role is filled by cysteine 105. Cysteine 105 and cysteine 201 are joined by a disulfide. Glycine 129 lines the ATP pocket. The interval 151–153 (KEQ) is interaction with tRNA. Cysteine 201 (cysteine persulfide intermediate) is an active-site residue. The segment at 306 to 307 (RY) is interaction with tRNA.

This sequence belongs to the MnmA/TRMU family.

The protein localises to the cytoplasm. It catalyses the reaction S-sulfanyl-L-cysteinyl-[protein] + uridine(34) in tRNA + AH2 + ATP = 2-thiouridine(34) in tRNA + L-cysteinyl-[protein] + A + AMP + diphosphate + H(+). In terms of biological role, catalyzes the 2-thiolation of uridine at the wobble position (U34) of tRNA, leading to the formation of s(2)U34. The sequence is that of tRNA-specific 2-thiouridylase MnmA from Desulfosudis oleivorans (strain DSM 6200 / JCM 39069 / Hxd3) (Desulfococcus oleovorans).